The primary structure comprises 331 residues: Small ribosomal subunit protein uS2 (331 aa).

Belongs to the universal ribosomal protein uS2 family.

In Rhodopseudomonas palustris (strain BisB5), this protein is Small ribosomal subunit protein uS2.